We begin with the raw amino-acid sequence, 111 residues long: Large ribosomal subunit protein uL22 (111 aa).

This sequence belongs to the universal ribosomal protein uL22 family. Part of the 50S ribosomal subunit.

Its function is as follows. This protein binds specifically to 23S rRNA; its binding is stimulated by other ribosomal proteins, e.g. L4, L17, and L20. It is important during the early stages of 50S assembly. It makes multiple contacts with different domains of the 23S rRNA in the assembled 50S subunit and ribosome. In terms of biological role, the globular domain of the protein is located near the polypeptide exit tunnel on the outside of the subunit, while an extended beta-hairpin is found that lines the wall of the exit tunnel in the center of the 70S ribosome. The protein is Large ribosomal subunit protein uL22 of Chlamydia pneumoniae (Chlamydophila pneumoniae).